The sequence spans 178 residues: ATP synthase subunit delta (178 aa).

The protein belongs to the ATPase delta chain family. As to quaternary structure, F-type ATPases have 2 components, F(1) - the catalytic core - and F(0) - the membrane proton channel. F(1) has five subunits: alpha(3), beta(3), gamma(1), delta(1), epsilon(1). F(0) has three main subunits: a(1), b(2) and c(10-14). The alpha and beta chains form an alternating ring which encloses part of the gamma chain. F(1) is attached to F(0) by a central stalk formed by the gamma and epsilon chains, while a peripheral stalk is formed by the delta and b chains.

It localises to the cell membrane. Its function is as follows. F(1)F(0) ATP synthase produces ATP from ADP in the presence of a proton or sodium gradient. F-type ATPases consist of two structural domains, F(1) containing the extramembraneous catalytic core and F(0) containing the membrane proton channel, linked together by a central stalk and a peripheral stalk. During catalysis, ATP synthesis in the catalytic domain of F(1) is coupled via a rotary mechanism of the central stalk subunits to proton translocation. This protein is part of the stalk that links CF(0) to CF(1). It either transmits conformational changes from CF(0) to CF(1) or is implicated in proton conduction. In Streptococcus equinus (Streptococcus bovis), this protein is ATP synthase subunit delta.